Consider the following 431-residue polypeptide: Mitochondrial distribution and morphology protein 12 (431 aa).

One can recognise an SMP-LTD domain in the interval 1–431 (MSIDLNWETL…VYPSFWTFLV (431 aa)). 2 disordered regions span residues 68 to 153 (DFYE…GVST) and 209 to 289 (QSHT…PKPE). Positions 69-96 (FYEDLDDDDGGSDEDDEGSNSCQTDEEN) are enriched in acidic residues. The span at 97 to 113 (EAAKTLRERRKMDRVER) shows a compositional bias: basic and acidic residues. Positions 115–129 (ANGSSNVSNPPSYTD) are enriched in polar residues. Positions 241 to 252 (SASTLAVSSSTT) are enriched in low complexity.

This sequence belongs to the MDM12 family. Component of the ER-mitochondria encounter structure (ERMES) or MDM complex, composed of mmm1, mdm10, mdm12 and mdm34. A mmm1 homodimer associates with one molecule of mdm12 on each side in a pairwise head-to-tail manner, and the SMP-LTD domains of mmm1 and mdm12 generate a continuous hydrophobic tunnel for phospholipid trafficking.

The protein resides in the mitochondrion outer membrane. It localises to the endoplasmic reticulum membrane. Functionally, component of the ERMES/MDM complex, which serves as a molecular tether to connect the endoplasmic reticulum (ER) and mitochondria. Components of this complex are involved in the control of mitochondrial shape and protein biogenesis, and function in nonvesicular lipid trafficking between the ER and mitochondria. Mdm12 is required for the interaction of the ER-resident membrane protein mmm1 and the outer mitochondrial membrane-resident beta-barrel protein mdm10. The mdm12-mmm1 subcomplex functions in the major beta-barrel assembly pathway that is responsible for biogenesis of all mitochondrial outer membrane beta-barrel proteins, and acts in a late step after the SAM complex. The mdm10-mdm12-mmm1 subcomplex further acts in the TOM40-specific pathway after the action of the mdm12-mmm1 complex. Essential for establishing and maintaining the structure of mitochondria and maintenance of mtDNA nucleoids. The polypeptide is Mitochondrial distribution and morphology protein 12 (Sclerotinia sclerotiorum (strain ATCC 18683 / 1980 / Ss-1) (White mold)).